A 261-amino-acid chain; its full sequence is Glucosamine-6-phosphate deaminase (261 aa).

Catalysis depends on Asp67, which acts as the Proton acceptor; for enolization step. Asp136 serves as the catalytic For ring-opening step. His138 (proton acceptor; for ring-opening step) is an active-site residue. Glu143 functions as the For ring-opening step in the catalytic mechanism.

The protein belongs to the glucosamine/galactosamine-6-phosphate isomerase family. NagB subfamily.

The enzyme catalyses alpha-D-glucosamine 6-phosphate + H2O = beta-D-fructose 6-phosphate + NH4(+). Its pathway is amino-sugar metabolism; N-acetylneuraminate degradation; D-fructose 6-phosphate from N-acetylneuraminate: step 5/5. In terms of biological role, catalyzes the reversible isomerization-deamination of glucosamine 6-phosphate (GlcN6P) to form fructose 6-phosphate (Fru6P) and ammonium ion. The polypeptide is Glucosamine-6-phosphate deaminase (Streptomyces coelicolor (strain ATCC BAA-471 / A3(2) / M145)).